A 290-amino-acid polypeptide reads, in one-letter code: NAD kinase (290 aa).

Asp73 serves as the catalytic Proton acceptor. NAD(+) is bound by residues 73 to 74 (DG), 147 to 148 (ND), Arg158, Arg175, Asp177, 188 to 193 (TAYALS), and Gln246.

This sequence belongs to the NAD kinase family. The cofactor is a divalent metal cation.

It localises to the cytoplasm. The catalysed reaction is NAD(+) + ATP = ADP + NADP(+) + H(+). Functionally, involved in the regulation of the intracellular balance of NAD and NADP, and is a key enzyme in the biosynthesis of NADP. Catalyzes specifically the phosphorylation on 2'-hydroxyl of the adenosine moiety of NAD to yield NADP. The sequence is that of NAD kinase from Thiobacillus denitrificans (strain ATCC 25259 / T1).